A 245-amino-acid polypeptide reads, in one-letter code: 1-(5-phosphoribosyl)-5-[(5-phosphoribosylamino)methylideneamino] imidazole-4-carboxamide isomerase (245 aa).

The Proton acceptor role is filled by aspartate 7. The Proton donor role is filled by aspartate 129.

It belongs to the HisA/HisF family.

It localises to the cytoplasm. It carries out the reaction 1-(5-phospho-beta-D-ribosyl)-5-[(5-phospho-beta-D-ribosylamino)methylideneamino]imidazole-4-carboxamide = 5-[(5-phospho-1-deoxy-D-ribulos-1-ylimino)methylamino]-1-(5-phospho-beta-D-ribosyl)imidazole-4-carboxamide. It participates in amino-acid biosynthesis; L-histidine biosynthesis; L-histidine from 5-phospho-alpha-D-ribose 1-diphosphate: step 4/9. The protein is 1-(5-phosphoribosyl)-5-[(5-phosphoribosylamino)methylideneamino] imidazole-4-carboxamide isomerase of Escherichia coli (strain ATCC 8739 / DSM 1576 / NBRC 3972 / NCIMB 8545 / WDCM 00012 / Crooks).